The chain runs to 281 residues: 2-dehydro-3-deoxyphosphooctonate aldolase (281 aa).

The protein belongs to the KdsA family.

Its subcellular location is the cytoplasm. It catalyses the reaction D-arabinose 5-phosphate + phosphoenolpyruvate + H2O = 3-deoxy-alpha-D-manno-2-octulosonate-8-phosphate + phosphate. It functions in the pathway carbohydrate biosynthesis; 3-deoxy-D-manno-octulosonate biosynthesis; 3-deoxy-D-manno-octulosonate from D-ribulose 5-phosphate: step 2/3. It participates in bacterial outer membrane biogenesis; lipopolysaccharide biosynthesis. In Pseudomonas fluorescens (strain Pf0-1), this protein is 2-dehydro-3-deoxyphosphooctonate aldolase.